A 305-amino-acid chain; its full sequence is Acyl transferase (305 aa).

Catalysis depends on charge relay system residues serine 116, aspartate 213, and histidine 243.

Belongs to the LuxD family.

The protein operates within lipid metabolism; fatty acid reduction for biolumincescence. Acyl transferase is part of the fatty acid reductase system required for aldehyde biosynthesis; it produces fatty acids for the luminescent reaction. The polypeptide is Acyl transferase (Shewanella woodyi (strain ATCC 51908 / MS32)).